Consider the following 222-residue polypeptide: Phosphoribosylformylglycinamidine synthase subunit PurQ (222 aa).

In terms of domain architecture, Glutamine amidotransferase type-1 spans 3–222 (SAVVLLPGLN…LFEGALGIAA (220 aa)). Cys86 serves as the catalytic Nucleophile. Catalysis depends on residues His196 and Glu198.

As to quaternary structure, part of the FGAM synthase complex composed of 1 PurL, 1 PurQ and 2 PurS subunits.

Its subcellular location is the cytoplasm. It carries out the reaction N(2)-formyl-N(1)-(5-phospho-beta-D-ribosyl)glycinamide + L-glutamine + ATP + H2O = 2-formamido-N(1)-(5-O-phospho-beta-D-ribosyl)acetamidine + L-glutamate + ADP + phosphate + H(+). The catalysed reaction is L-glutamine + H2O = L-glutamate + NH4(+). Its pathway is purine metabolism; IMP biosynthesis via de novo pathway; 5-amino-1-(5-phospho-D-ribosyl)imidazole from N(2)-formyl-N(1)-(5-phospho-D-ribosyl)glycinamide: step 1/2. Its function is as follows. Part of the phosphoribosylformylglycinamidine synthase complex involved in the purines biosynthetic pathway. Catalyzes the ATP-dependent conversion of formylglycinamide ribonucleotide (FGAR) and glutamine to yield formylglycinamidine ribonucleotide (FGAM) and glutamate. The FGAM synthase complex is composed of three subunits. PurQ produces an ammonia molecule by converting glutamine to glutamate. PurL transfers the ammonia molecule to FGAR to form FGAM in an ATP-dependent manner. PurS interacts with PurQ and PurL and is thought to assist in the transfer of the ammonia molecule from PurQ to PurL. The protein is Phosphoribosylformylglycinamidine synthase subunit PurQ of Mesorhizobium japonicum (strain LMG 29417 / CECT 9101 / MAFF 303099) (Mesorhizobium loti (strain MAFF 303099)).